We begin with the raw amino-acid sequence, 483 residues long: 5-hydroxytryptamine receptor 3A (483 aa).

Positions 1-23 are cleaved as a signal peptide; that stretch reads MPLCIPQVLLALFLSVLIAQGEG. At 24–246 the chain is on the extracellular side; that stretch reads SRRRATQAHS…MKFYVVIRRR (223 aa). N-linked (GlcNAc...) asparagine glycans are attached at residues Asn-109, Asn-175, and Asn-191. Cys-162 and Cys-176 are joined by a disulfide. A helical transmembrane segment spans residues 247–273; sequence PLFYAVSLLLPSIFLMVVDIVGFCLPP. Residues 274–278 are Cytoplasmic-facing; it reads DSGER. The chain crosses the membrane as a helical span at residues 279 to 297; the sequence is VSFKITLLLGYSVFLIIVS. The Extracellular portion of the chain corresponds to 298 to 307; that stretch reads DTLPATAIGT. Residues 308–326 traverse the membrane as a helical segment; the sequence is PLIGVYFVVCMALLVISLA. At 327-460 the chain is on the cytoplasmic side; the sequence is ETIFIVQLVH…GYVLDRLLFR (134 aa). A disordered region spans residues 393 to 414; the sequence is VGSPQDLEKTSRSRDSPLPPPR. Residues 398–407 show a composition bias toward basic and acidic residues; the sequence is DLEKTSRSRD. The tract at residues 419 to 455 is HA-stretch; determines single-channel conductance in 5-HT3 receptors; the sequence is AVRGLLQELSSIRHSLEKRDEMREVARDWLRVGYVLD. A helical transmembrane segment spans residues 461–480; sequence IYLLAVLAYSITLVTLWSIW. The Extracellular segment spans residues 481–483; sequence HYS.

Belongs to the ligand-gated ion channel (TC 1.A.9) family. 5-hydroxytryptamine receptor (TC 1.A.9.2) subfamily. HTR3A sub-subfamily. As to quaternary structure, forms homopentameric as well as heteropentameric serotonin-activated cation-selective channel complexes with HTR3B or HTR3C or HTR3D or HTR3E. The homomeric complex is functional but exhibits low conductance with modified voltage dependence, and decreased agonist and antagonist affinity. Heteropentameric complexes display properties which resemble that of neuronal serotonin-activated channels in vivo. Interacts with RIC3. Expressed in central and peripheral neurons.

It localises to the postsynaptic cell membrane. The protein resides in the cell membrane. It catalyses the reaction Na(+)(in) = Na(+)(out). The enzyme catalyses K(+)(in) = K(+)(out). It carries out the reaction Ca(2+)(in) = Ca(2+)(out). The catalysed reaction is Mg(2+)(in) = Mg(2+)(out). Forms serotonin (5-hydroxytryptamine/5-HT3)-activated cation-selective channel complexes, which when activated cause fast, depolarizing responses in neurons. The chain is 5-hydroxytryptamine receptor 3A from Rattus norvegicus (Rat).